The chain runs to 321 residues: Methionyl-tRNA formyltransferase (321 aa).

111–114 (GLLP) contributes to the (6S)-5,6,7,8-tetrahydrofolate binding site.

The protein belongs to the Fmt family.

It catalyses the reaction L-methionyl-tRNA(fMet) + (6R)-10-formyltetrahydrofolate = N-formyl-L-methionyl-tRNA(fMet) + (6S)-5,6,7,8-tetrahydrofolate + H(+). Attaches a formyl group to the free amino group of methionyl-tRNA(fMet). The formyl group appears to play a dual role in the initiator identity of N-formylmethionyl-tRNA by promoting its recognition by IF2 and preventing the misappropriation of this tRNA by the elongation apparatus. This Chlamydia abortus (strain DSM 27085 / S26/3) (Chlamydophila abortus) protein is Methionyl-tRNA formyltransferase.